A 251-amino-acid polypeptide reads, in one-letter code: 2,3-bisphosphoglycerate-dependent phosphoglycerate mutase 2 (251 aa).

Substrate is bound by residues 8-15, 21-22, Arg-60, 87-90, Lys-98, 114-115, and 183-184; these read RHGESTWN, TG, ERHY, RR, and GN. His-9 (tele-phosphohistidine intermediate) is an active-site residue. Glu-87 functions as the Proton donor/acceptor in the catalytic mechanism.

The protein belongs to the phosphoglycerate mutase family. BPG-dependent PGAM subfamily. As to quaternary structure, homodimer.

The catalysed reaction is (2R)-2-phosphoglycerate = (2R)-3-phosphoglycerate. Its pathway is carbohydrate degradation; glycolysis; pyruvate from D-glyceraldehyde 3-phosphate: step 3/5. Catalyzes the interconversion of 2-phosphoglycerate and 3-phosphoglycerate. The sequence is that of 2,3-bisphosphoglycerate-dependent phosphoglycerate mutase 2 from Nitrosospira multiformis (strain ATCC 25196 / NCIMB 11849 / C 71).